The following is a 141-amino-acid chain: Hemoglobin subunit alpha-1 (141 aa).

The Globin domain occupies 1 to 141 (VLTEDDKNHI…VAKTLVAHYR (141 aa)). Position 58 (His-58) interacts with O2. Heme b is bound at residue His-87.

It belongs to the globin family. In terms of assembly, heterotetramer of two alpha chains and two beta chains. Red blood cells.

Functionally, involved in oxygen transport from the lung to the various peripheral tissues. The protein is Hemoglobin subunit alpha-1 of Iguana iguana (Common iguana).